Here is a 45-residue protein sequence, read N- to C-terminus: Mu-conotoxin-like Cal 12.1.1d (45 aa).

4 disulfides stabilise this stretch: Cys-3–Cys-16, Cys-11–Cys-28, Cys-18–Cys-33, and Cys-27–Cys-39. Residue Trp-17 is modified to 6'-bromotryptophan. At Glu-21 the chain carries 4-carboxyglutamate. 4-hydroxyproline is present on Pro-23. Residues Trp-37 and Trp-38 each carry the 6'-bromotryptophan modification. 4-hydroxyproline is present on Pro-40. Trp-44 is subject to 6'-bromotryptophan.

As to expression, expressed by the venom duct.

It is found in the secreted. Mu-conotoxins block voltage-gated sodium channels. This toxin reversibly blocks voltage-gated sodium channel in cephalopods, with no alteration in the voltage dependence of sodium conductance or on the kinetics of inactivation. This chain is Mu-conotoxin-like Cal 12.1.1d, found in Californiconus californicus (California cone).